The sequence spans 350 residues: S-adenosylmethionine:tRNA ribosyltransferase-isomerase (350 aa).

The protein belongs to the QueA family. As to quaternary structure, monomer.

The protein resides in the cytoplasm. It catalyses the reaction 7-aminomethyl-7-carbaguanosine(34) in tRNA + S-adenosyl-L-methionine = epoxyqueuosine(34) in tRNA + adenine + L-methionine + 2 H(+). It functions in the pathway tRNA modification; tRNA-queuosine biosynthesis. In terms of biological role, transfers and isomerizes the ribose moiety from AdoMet to the 7-aminomethyl group of 7-deazaguanine (preQ1-tRNA) to give epoxyqueuosine (oQ-tRNA). The chain is S-adenosylmethionine:tRNA ribosyltransferase-isomerase from Bacillus cereus (strain G9842).